A 1624-amino-acid chain; its full sequence is Putative serine/threonine-protein kinase/receptor R831 (1624 aa).

A signal peptide spans 1–25; sequence MHSVYTKYTIILILLVIYQGLPTNT. N-linked (GlcNAc...) asparagine; by host glycosylation is found at asparagine 152, asparagine 169, asparagine 200, asparagine 205, asparagine 225, asparagine 240, asparagine 245, asparagine 292, asparagine 364, asparagine 479, asparagine 541, asparagine 720, and asparagine 737. The chain crosses the membrane as a helical span at residues 747 to 767; sequence VIPIACIFGLLLLTLLIVIIF. The region spanning 786–1049 is the Protein kinase 1 domain; the sequence is LEIGETLGTG…EIMTRLSNIL (264 aa). Residues 792–800 and lysine 813 contribute to the ATP site; that span reads LGTGGYGEV. Residue aspartate 908 is the Proton acceptor of the active site. The segment covering 1054-1093 has biased composition (low complexity); sequence NMTSGTSSSSLSSGGIGKSITDSKSSNSRSSVESSNTSNT. Residues 1054–1101 form a disordered region; it reads NMTSGTSSSSLSSGGIGKSITDSKSSNSRSSVESSNTSNTFRGIDRHN. In terms of domain architecture, Guanylate cyclase spans 1109-1252; the sequence is TVAFIDIISA…STVNITGKIT (144 aa). Residues 1364-1615 form the Protein kinase 2 domain; the sequence is ISIGKQIGLG…MTEVVQQLML (252 aa). Residues 1370-1378 and lysine 1391 contribute to the ATP site; that span reads IGLGSYGIV. Aspartate 1487 functions as the Proton acceptor in the catalytic mechanism.

The protein resides in the membrane. The catalysed reaction is L-seryl-[protein] + ATP = O-phospho-L-seryl-[protein] + ADP + H(+). It carries out the reaction L-threonyl-[protein] + ATP = O-phospho-L-threonyl-[protein] + ADP + H(+). In Acanthamoeba polyphaga (Amoeba), this protein is Putative serine/threonine-protein kinase/receptor R831.